Reading from the N-terminus, the 250-residue chain is Pyrroloquinoline-quinone synthase (250 aa).

It belongs to the PqqC family.

The enzyme catalyses 6-(2-amino-2-carboxyethyl)-7,8-dioxo-1,2,3,4,7,8-hexahydroquinoline-2,4-dicarboxylate + 3 O2 = pyrroloquinoline quinone + 2 H2O2 + 2 H2O + H(+). It participates in cofactor biosynthesis; pyrroloquinoline quinone biosynthesis. Functionally, ring cyclization and eight-electron oxidation of 3a-(2-amino-2-carboxyethyl)-4,5-dioxo-4,5,6,7,8,9-hexahydroquinoline-7,9-dicarboxylic-acid to PQQ. The polypeptide is Pyrroloquinoline-quinone synthase (Xanthomonas campestris pv. campestris (strain B100)).